The chain runs to 197 residues: Ribonuclease HII (197 aa).

An RNase H type-2 domain is found at 3–192 (QLIAGVDEVG…VQLSLMQRGG (190 aa)). A divalent metal cation contacts are provided by aspartate 9, glutamate 10, and aspartate 101.

It belongs to the RNase HII family. It depends on Mn(2+) as a cofactor. The cofactor is Mg(2+).

The protein resides in the cytoplasm. The catalysed reaction is Endonucleolytic cleavage to 5'-phosphomonoester.. Its function is as follows. Endonuclease that specifically degrades the RNA of RNA-DNA hybrids. This chain is Ribonuclease HII, found in Pseudoalteromonas atlantica (strain T6c / ATCC BAA-1087).